Here is a 599-residue protein sequence, read N- to C-terminus: Protein ECM25 (599 aa).

One can recognise a Rho-GAP domain in the interval 181–359; the sequence is NRLTPLAIRQ…NLLDFFPEIA (179 aa). 3 disordered regions span residues 362–447, 468–495, and 543–563; these read ISSP…PLPI, ASSSTDTLSSPTKTPSADSLPLSNSSTD, and ELQEKKKKNETTSKTADKFSQ. 3 stretches are compositionally biased toward low complexity: residues 363–373, 396–413, and 468–483; these read SSPPSSVSSSS, TLPRSRSPSPQRSVTSPT, and ASSSTDTLSSPTKTPS. The segment covering 543–562 has biased composition (basic and acidic residues); sequence ELQEKKKKNETTSKTADKFS.

It is found in the cytoplasm. Functionally, may be involved in cell wall organization and biogenesis. This is Protein ECM25 (ECM25) from Saccharomyces cerevisiae (strain ATCC 204508 / S288c) (Baker's yeast).